The chain runs to 314 residues: 3'-5' exoribonuclease YhaM (314 aa).

The HD domain maps to 163-279; sequence HVVSMLDLAK…LHYIDNLDAK (117 aa).

It belongs to the YhaM family.

Functionally, shows a 3'-5' exoribonuclease activity. This is 3'-5' exoribonuclease YhaM from Bacillus cereus (strain AH820).